The sequence spans 148 residues: DnaJ homolog subfamily C member 24 (148 aa).

Positions 10–81 (DWYSILGADP…ETKKKYDLQR (72 aa)) constitute a J domain. The region spanning 92 to 147 (VDAQVRLEEMSWNQGDESFFLSCRCGGKYTVSKDEAQEATLISCDACSLIVELLHQ) is the DPH-type MB domain. 4 residues coordinate Zn(2+): cysteine 114, cysteine 116, cysteine 135, and cysteine 138.

This sequence belongs to the DPH4 family. In terms of assembly, monomer and homooligomer. Iron binding promotes oligomerization. As to expression, detected in heart, brain, spleen, lung, liver, kidney and testis.

It localises to the cytoplasm. The protein localises to the cytoskeleton. It functions in the pathway protein modification; peptidyl-diphthamide biosynthesis. Functionally, the iron-bound form is redox-active and can function as electron carrier. Stimulates the ATPase activity of several Hsp70-type chaperones. This ability is enhanced by iron-binding. Plays a role in the diphthamide biosynthesis, a post-translational modification of histidine which occurs in translation elongation factor 2 (EEF2). The protein is DnaJ homolog subfamily C member 24 (Dnajc24) of Mus musculus (Mouse).